The primary structure comprises 320 residues: Chitinase 3 (320 aa).

The signal sequence occupies residues 1 to 18; sequence MRALALAVVAMAVVAVRG. Residues 19-59 enclose the Chitin-binding type-1 domain; the sequence is EQCGSQAGGALCPNCLCCSQYGWCGSTSDYCGAGCQSQCSG. 8 disulfide bridges follow: cysteine 21–cysteine 36, cysteine 30–cysteine 42, cysteine 33–cysteine 61, cysteine 35–cysteine 49, cysteine 53–cysteine 57, cysteine 97–cysteine 159, cysteine 172–cysteine 180, and cysteine 279–cysteine 311. Glutamate 141 functions as the Proton donor in the catalytic mechanism.

Belongs to the glycosyl hydrolase 19 family. Chitinase class I subfamily. Expressed at low levels in roots, leaves, sheaths and meristems.

It catalyses the reaction Random endo-hydrolysis of N-acetyl-beta-D-glucosaminide (1-&gt;4)-beta-linkages in chitin and chitodextrins.. In terms of biological role, hydrolyzes chitin and plays a role in defense against fungal pathogens containing chitin. Inhibits the growth of T.reesei fungus on plate assay. This chain is Chitinase 3 (Cht3), found in Oryza sativa subsp. japonica (Rice).